An 82-amino-acid polypeptide reads, in one-letter code: Acyl carrier protein (82 aa).

A Carrier domain is found at 3-81 (LSREKVLESI…DAVDFIIAAK (79 aa)). An O-(pantetheine 4'-phosphoryl)serine modification is found at S41.

This sequence belongs to the acyl carrier protein (ACP) family. In terms of processing, 4'-phosphopantetheine is transferred from CoA to a specific serine of apo-ACP by AcpS. This modification is essential for activity because fatty acids are bound in thioester linkage to the sulfhydryl of the prosthetic group.

Its subcellular location is the cytoplasm. It participates in lipid metabolism; fatty acid biosynthesis. Its function is as follows. Carrier of the growing fatty acid chain in fatty acid biosynthesis. In Tropheryma whipplei (strain Twist) (Whipple's bacillus), this protein is Acyl carrier protein.